A 303-amino-acid chain; its full sequence is D-alanine--D-alanine ligase (303 aa).

One can recognise an ATP-grasp domain in the interval 100–295; that stretch reads KQLLRRHGIL…FPALIARLIE (196 aa). 127–180 provides a ligand contact to ATP; the sequence is GLGYPLFVKPNTGGSSLCLSRVTQPEGLAPALEAVFAHCGEAIVEPAIPGVEVT. Residues Asp-249, Glu-262, and Asn-264 each contribute to the Mg(2+) site.

Belongs to the D-alanine--D-alanine ligase family. Mg(2+) is required as a cofactor. Mn(2+) serves as cofactor.

Its subcellular location is the cytoplasm. The enzyme catalyses 2 D-alanine + ATP = D-alanyl-D-alanine + ADP + phosphate + H(+). It participates in cell wall biogenesis; peptidoglycan biosynthesis. Functionally, cell wall formation. The chain is D-alanine--D-alanine ligase from Nitratidesulfovibrio vulgaris (strain ATCC 29579 / DSM 644 / CCUG 34227 / NCIMB 8303 / VKM B-1760 / Hildenborough) (Desulfovibrio vulgaris).